A 306-amino-acid polypeptide reads, in one-letter code: Meiotically up-regulated gene 73 protein (306 aa).

7 helical membrane-spanning segments follow: residues 28–48, 59–79, 103–123, 125–145, 154–174, 190–210, and 224–244; these read YWAV…VSIF, FFSI…CNYG, YIQW…TVGV, ILEI…LLAA, WAYY…SVVL, FLWS…CWIL, and IFYS…FSWM.

The protein belongs to the archaeal/bacterial/fungal opsin family.

The protein localises to the membrane. In terms of biological role, has a role in meiosis. The polypeptide is Meiotically up-regulated gene 73 protein (mug73) (Schizosaccharomyces pombe (strain 972 / ATCC 24843) (Fission yeast)).